Reading from the N-terminus, the 806-residue chain is DNA topoisomerase 4 subunit A (806 aa).

In terms of domain architecture, Topo IIA-type catalytic spans 33–499 (LPDARDGLKP…EEIKINLEVM (467 aa)). The O-(5'-phospho-DNA)-tyrosine intermediate role is filled by tyrosine 121.

This sequence belongs to the type II topoisomerase GyrA/ParC subunit family. ParC type 2 subfamily. In terms of assembly, heterotetramer composed of ParC and ParE.

It is found in the cell membrane. The protein resides in the cytoplasm. The enzyme catalyses ATP-dependent breakage, passage and rejoining of double-stranded DNA.. Topoisomerase IV is essential for chromosome segregation. It relaxes supercoiled DNA. Performs the decatenation events required during the replication of a circular DNA molecule. This is DNA topoisomerase 4 subunit A from Bacillus subtilis (strain 168).